The chain runs to 71 residues: U3-agatoxin-Ao1a (71 aa).

The signal sequence occupies residues 1 to 20 (MKAVIFFCLLSVMVFTVIEA). The propeptide occupies 21-33 (VKEEGTKPAEAAR). Intrachain disulfides connect Cys35/Cys51, Cys42/Cys56, Cys50/Cys66, and Cys58/Cys64. The residue at position 70 (Ser70) is a Serine amide.

It belongs to the neurotoxin 07 (Beta/delta-agtx) family. 01 (aga-2) subfamily. As to expression, expressed by the venom gland.

Its subcellular location is the secreted. Functionally, insecticidal neurotoxin that modulates the insect Nav channel (DmNaV1/tipE (para/tipE)) in a unique manner, with both the activation and inactivation processes being affected. The voltage dependence of activation is shifted toward more hyperpolarized potentials (analogous to site 4 toxins) and a non-inactivating persistent sodium current is induced (site 3-like action). Interestingly, both effects take place in a voltage-dependent manner, producing a bell-shaped curve between -80 and 0 mV. Compared to beta/delta-agatoxin-1 to -3, this toxin appears to affect the insect sodium channel only weakly. The sequence is that of U3-agatoxin-Ao1a from Agelena orientalis (Funnel-web spider).